A 434-amino-acid chain; its full sequence is Serine--tRNA ligase (434 aa).

237–239 lines the L-serine pocket; the sequence is TAE. 268–270 lines the ATP pocket; that stretch reads RAE. Glu-291 serves as a coordination point for L-serine. 358 to 361 provides a ligand contact to ATP; sequence EISS. Residue Ser-393 participates in L-serine binding.

This sequence belongs to the class-II aminoacyl-tRNA synthetase family. Type-1 seryl-tRNA synthetase subfamily. In terms of assembly, homodimer. The tRNA molecule binds across the dimer.

The protein resides in the cytoplasm. It carries out the reaction tRNA(Ser) + L-serine + ATP = L-seryl-tRNA(Ser) + AMP + diphosphate + H(+). The catalysed reaction is tRNA(Sec) + L-serine + ATP = L-seryl-tRNA(Sec) + AMP + diphosphate + H(+). It functions in the pathway aminoacyl-tRNA biosynthesis; selenocysteinyl-tRNA(Sec) biosynthesis; L-seryl-tRNA(Sec) from L-serine and tRNA(Sec): step 1/1. Its function is as follows. Catalyzes the attachment of serine to tRNA(Ser). Is also able to aminoacylate tRNA(Sec) with serine, to form the misacylated tRNA L-seryl-tRNA(Sec), which will be further converted into selenocysteinyl-tRNA(Sec). The chain is Serine--tRNA ligase from Rhodopseudomonas palustris (strain BisB5).